Reading from the N-terminus, the 171-residue chain is L-methionine sulfoximine/L-methionine sulfone acetyltransferase (171 aa).

The 163-residue stretch at M1–D163 folds into the N-acetyltransferase domain. Substrate-binding positions include R72 to F74 and E82 to S84. Acetyl-CoA is bound by residues V85–V87, G93–R98, N124, and S133.

In terms of assembly, homodimer.

It catalyses the reaction L-methionine sulfoximine + acetyl-CoA = N-acetyl-L-methionine sulfoximine + CoA + H(+). The catalysed reaction is L-methionine sulfone + acetyl-CoA = N-acetyl-L-methionine sulfone + CoA + H(+). In terms of biological role, plays a role in the resistance against the toxic effects of L-methionine sulfoximine (MSX), a rare amino acid which inhibits glutamine synthetase (GlnA). Catalyzes the acetylation of MSX. It can also use L-methionine sulfone (MSO). Also catalyzes the acylation of free L-amino acids using an acyl-CoA as acyl donor. In Salmonella typhimurium (strain LT2 / SGSC1412 / ATCC 700720), this protein is L-methionine sulfoximine/L-methionine sulfone acetyltransferase (yncA).